The sequence spans 229 residues: MAIQQRDSRGGTNRDARTNRRIKAREVRAIGPEGEQLGVLPIEQALARAQELGMDLVEVSPMAKPPVCKIMDYGKFKYLEKKKQNEAKKKQVVVQLKEVKLRPRTEEHDYATKIKKVREFLGESNKARITVTFRGREMSHRELGQKVLQRIIEDLREVAVIEAAPRMEGRQMFMILAPNPRMLQAQRDRAKAAAQAAPAAAPQPGAPAAPPAAPAPAPAPEQTPEAGPR.

2 disordered regions span residues 1 to 21 and 184 to 229; these read MAIQQRDSRGGTNRDARTNRR and QAQR…AGPR. The span at 192–203 shows a compositional bias: low complexity; it reads AAAQAAPAAAPQ. The segment covering 204–221 has biased composition (pro residues); the sequence is PGAPAAPPAAPAPAPAPE.

This sequence belongs to the IF-3 family. In terms of assembly, monomer.

Its subcellular location is the cytoplasm. In terms of biological role, IF-3 binds to the 30S ribosomal subunit and shifts the equilibrium between 70S ribosomes and their 50S and 30S subunits in favor of the free subunits, thus enhancing the availability of 30S subunits on which protein synthesis initiation begins. The sequence is that of Translation initiation factor IF-3 from Anaeromyxobacter sp. (strain Fw109-5).